A 283-amino-acid polypeptide reads, in one-letter code: Bifunctional protein FolD (283 aa).

Residues 157–159 (GNG) and I224 each bind NADP(+).

It belongs to the tetrahydrofolate dehydrogenase/cyclohydrolase family. In terms of assembly, homodimer.

The enzyme catalyses (6R)-5,10-methylene-5,6,7,8-tetrahydrofolate + NADP(+) = (6R)-5,10-methenyltetrahydrofolate + NADPH. The catalysed reaction is (6R)-5,10-methenyltetrahydrofolate + H2O = (6R)-10-formyltetrahydrofolate + H(+). The protein operates within one-carbon metabolism; tetrahydrofolate interconversion. Functionally, catalyzes the oxidation of 5,10-methylenetetrahydrofolate to 5,10-methenyltetrahydrofolate and then the hydrolysis of 5,10-methenyltetrahydrofolate to 10-formyltetrahydrofolate. The sequence is that of Bifunctional protein FolD from Mycoplasmoides gallisepticum (strain R(low / passage 15 / clone 2)) (Mycoplasma gallisepticum).